Here is an 875-residue protein sequence, read N- to C-terminus: Aminopeptidase M1-B (875 aa).

Positions Ile96–Val203 are required for membrane association. Substrate is bound by residues Glu136 and Gly269–Asn273. His305 is a binding site for Zn(2+). Glu306 functions as the Proton acceptor in the catalytic mechanism. Zn(2+) is bound by residues His309 and Glu328. Positions Leu722–Leu723 match the Dileucine internalization motif motif.

This sequence belongs to the peptidase M1 family. Homodimer. Zn(2+) serves as cofactor.

Its subcellular location is the membrane. It is found in the microsome membrane. The protein localises to the cytoplasm. The enzyme catalyses Release of an N-terminal amino acid, Xaa-|-Yaa- from a peptide, amide or arylamide. Xaa is preferably Ala, but may be most amino acids including Pro (slow action). When a terminal hydrophobic residue is followed by a prolyl residue, the two may be released as an intact Xaa-Pro dipeptide.. The chain is Aminopeptidase M1-B from Oryza sativa subsp. japonica (Rice).